A 631-amino-acid polypeptide reads, in one-letter code: Nucleoside triphosphatase I (631 aa).

One can recognise a Helicase ATP-binding domain in the interval 42–204 (FLGLDSMHSL…TMLVNLLRPG (163 aa)). ATP is bound at residue 55-62 (HETGVGKT). Positions 141 to 144 (DECH) match the DEXH box motif. Residues 367-532 (KFIDVCLGIL…EFVQLFRVFK (166 aa)) enclose the Helicase C-terminal domain. Residues 457 to 524 (DIFILDMTWN…EIIQSKSKEF (68 aa)) form a binding to the cap-specific mRNA (nucleoside-2'-O-)-methyltransferase region.

It belongs to the helicase family. NPH I subfamily. Monomer. Interacts (via C-terminus) with RAP94/OPG109 (via N-terminus). Interacts with the cap-specific mRNA (nucleoside-2'-O-)-methyltransferase OPG102.

Its subcellular location is the virion. The enzyme catalyses a ribonucleoside 5'-triphosphate + H2O = a ribonucleoside 5'-diphosphate + phosphate + H(+). In terms of biological role, DNA-dependent ATPase that acts as a 5' to 3' translocase on single-stranded DNA and thereby plays a role in transcription termination of viral early genes. Uses forward translocation in concert with the viral RNA polymerase RAP94/OPG109 subunit and the capping enzyme/VTF to catalyze release of UUUUUNU-containing nascent RNA from the elongation complex. In addition, acts as a positive elongation factor to assist transcription through problematic sequences. The polypeptide is Nucleoside triphosphatase I (OPG123) (Vaccinia virus (strain Copenhagen) (VACV)).